Here is a 451-residue protein sequence, read N- to C-terminus: MPQTQKPDFPGNDLGDQFRFWPKHNEKIYERLENKHAWLEEKRAAAQGDGKPPATQRSEVDPLENEMILNIGPQHPATHGVLRCVVKMDGETIEKSVLDIGYLHRGIEKLAEHKTYQEFMPYTDRMDYLSPYSNNVAWCLAVEKLADIEVPERAQWIRMIMSELARISSHCLWLGVGMMDAGAVSGFVWTFQEREEIYSIMDEVAGARFTVSHSRIGGVANDFSPRAIEMIRDFVDTFPDRIAGWEGLLNKNRIWVERNKGVGRVTKEEALELGLTGPNLRGSGVPYDVRRFEPYLKYDEVDFTIPVREEGDCLARYFLRLDEMKQSVRIIEQCLDRMTEGPIRSDDAKEAYPSKEEVYYSMEGMIHDFMYTDVGTVPPKGAHSYHAIEGPKGELGFYLTSDGTGRPWRVRINAPSFTNLQAMEHMLEGEMVADTVVIIGSLDPVMGEADK.

The protein belongs to the complex I 49 kDa subunit family. In terms of assembly, NDH-1 is composed of 14 different subunits. Subunits NuoB, C, D, E, F, and G constitute the peripheral sector of the complex.

Its subcellular location is the cell inner membrane. The catalysed reaction is a quinone + NADH + 5 H(+)(in) = a quinol + NAD(+) + 4 H(+)(out). Functionally, NDH-1 shuttles electrons from NADH, via FMN and iron-sulfur (Fe-S) centers, to quinones in the respiratory chain. The immediate electron acceptor for the enzyme in this species is believed to be a menaquinone. Couples the redox reaction to proton translocation (for every two electrons transferred, four hydrogen ions are translocated across the cytoplasmic membrane), and thus conserves the redox energy in a proton gradient. The sequence is that of NADH-quinone oxidoreductase subunit D from Salinibacter ruber (strain DSM 13855 / M31).